Reading from the N-terminus, the 103-residue chain is Alpha-ketoglutarate dehydrogenase component 4 (103 aa).

An N-acetylmethionine modification is found at methionine 1. Lysine 5 is subject to N6-succinyllysine. The segment at 20–69 is disordered; that stretch reads TPLIRFPDRRDNPKPNVSEALRSAGLPSHSSVISQHSKGSKSPDLLMYQG. Positions 47-56 are enriched in polar residues; that stretch reads SHSSVISQHS. Phosphoserine is present on residues serine 49, serine 61, and serine 90.

The protein belongs to the alpha-ketoglutarate dehydrogenase component 4 family. As to quaternary structure, component of the 2-oxoglutarate dehydrogenase complex (OGDHC), composed of OGDH (2-oxoglutarate dehydrogenase; also called E1 subunit), DLST (dihydrolipoamide succinyltransferase; also called E2 subunit) and DLD (dihydrolipoamide dehydrogenase; also called E3 subunit), and the assembly factor KGD4. Within OGDHC complex, interacts (via N-terminus) with E3 subunit and (via C-terminus) with E2 subunit.

It is found in the mitochondrion. Its function is as follows. Molecular adapter that is necessary to form a stable 2-oxoglutarate dehydrogenase enzyme complex (OGDHC). Enables the specific recruitment of E3 subunit to E2 subunit in the 2-oxoglutarate dehydrogenase complex (OGDHC). The sequence is that of Alpha-ketoglutarate dehydrogenase component 4 from Homo sapiens (Human).